Here is a 574-residue protein sequence, read N- to C-terminus: M-phase inducer phosphatase 2 (574 aa).

2 disordered regions span residues 31 to 51 (GFGF…SSSP) and 90 to 110 (RRTS…AGLC). At Ser42 the chain carries Phosphoserine. Over residues 90 to 105 (RRTSECSLSSESSESS) the composition is skewed to low complexity. Ser166 is modified (phosphoserine; by MELK). Ser246 is modified (phosphoserine). Ser319 bears the Phosphoserine; by MAPKAPK2 and MELK mark. Ser319 bears the Phosphoserine; by MELK and MAPK14 mark. Residues 339–359 (DVPVLSKRRKSGTPLEEQQLE) form a disordered region. At Ser349 the chain carries Phosphoserine; by AURKA. The residue at position 370 (Ser370) is a Phosphoserine; by BRSK1 and MAPK14. The region spanning 425–532 (IVEKFVIVDC…FFPQHPNFCE (108 aa)) is the Rhodanese domain. The active site involves Cys481. A Phosphoserine modification is found at Ser557.

It belongs to the MPI phosphatase family. As to quaternary structure, interacts with MAPK14 and 14-3-3 proteins. Phosphorylated by BRSK1 in vitro. Phosphorylated by CHEK1, which inhibits the activity of this protein. Phosphorylation at Ser-349 by AURKA might locally participate in the control of the onset of mitosis. Phosphorylation by MELK at Ser-166 promotes localization to the centrosome and the spindle poles during mitosis. Phosphorylation at Ser-319 and Ser-370 by MAPK14 is required for binding to 14-3-3 proteins.

The protein localises to the cytoplasm. Its subcellular location is the cytoskeleton. It localises to the microtubule organizing center. The protein resides in the centrosome. It is found in the spindle pole. The enzyme catalyses O-phospho-L-tyrosyl-[protein] + H2O = L-tyrosyl-[protein] + phosphate. Its activity is regulated as follows. Stimulated by B-type cyclins. Functionally, tyrosine protein phosphatase which functions as a dosage-dependent inducer of mitotic progression. Directly dephosphorylates CDK1 and stimulates its kinase activity. Required for G2/M phases of the cell cycle progression and abscission during cytokinesis in a ECT2-dependent manner. The three isoforms seem to have a different level of activity. This Rattus norvegicus (Rat) protein is M-phase inducer phosphatase 2 (Cdc25b).